The chain runs to 216 residues: Somatotropin (216 aa).

Residues 1–26 (MAASPRNSVLLAFALLCLPWPQEVGA) form the signal peptide. His45 lines the Zn(2+) pocket. Cys78 and Cys189 form a disulfide bridge. A Phosphoserine modification is found at Ser131. Glu198 provides a ligand contact to Zn(2+). Cys206 and Cys214 are oxidised to a cystine.

Belongs to the somatotropin/prolactin family.

It is found in the secreted. Plays an important role in growth control. Its major role in stimulating body growth is to stimulate the liver and other tissues to secrete IGF1. It stimulates both the differentiation and proliferation of myoblasts. It also stimulates amino acid uptake and protein synthesis in muscle and other tissues. This chain is Somatotropin (GH1), found in Canis lupus familiaris (Dog).